Reading from the N-terminus, the 395-residue chain is S-adenosylmethionine synthase (395 aa).

Histidine 14 is a binding site for ATP. A Mg(2+)-binding site is contributed by aspartate 16. Glutamate 42 contacts K(+). Positions 55 and 98 each coordinate L-methionine. The segment at 98–108 (QSPDIAMGVDK) is flexible loop. Residues 175–177 (DGK), 242–243 (RF), aspartate 251, 257–258 (RK), alanine 274, and lysine 278 each bind ATP. Aspartate 251 is a binding site for L-methionine. An L-methionine-binding site is contributed by lysine 282.

This sequence belongs to the AdoMet synthase family. Homotetramer; dimer of dimers. Requires Mg(2+) as cofactor. It depends on K(+) as a cofactor.

Its subcellular location is the cytoplasm. It catalyses the reaction L-methionine + ATP + H2O = S-adenosyl-L-methionine + phosphate + diphosphate. The protein operates within amino-acid biosynthesis; S-adenosyl-L-methionine biosynthesis; S-adenosyl-L-methionine from L-methionine: step 1/1. Functionally, catalyzes the formation of S-adenosylmethionine (AdoMet) from methionine and ATP. The overall synthetic reaction is composed of two sequential steps, AdoMet formation and the subsequent tripolyphosphate hydrolysis which occurs prior to release of AdoMet from the enzyme. This chain is S-adenosylmethionine synthase, found in Thermosipho melanesiensis (strain DSM 12029 / CIP 104789 / BI429).